The sequence spans 198 residues: ATP-dependent Clp protease proteolytic subunit (198 aa).

The Nucleophile role is filled by Ser-98. His-123 is a catalytic residue.

Belongs to the peptidase S14 family. Fourteen ClpP subunits assemble into 2 heptameric rings which stack back to back to give a disk-like structure with a central cavity, resembling the structure of eukaryotic proteasomes.

The protein resides in the cytoplasm. It carries out the reaction Hydrolysis of proteins to small peptides in the presence of ATP and magnesium. alpha-casein is the usual test substrate. In the absence of ATP, only oligopeptides shorter than five residues are hydrolyzed (such as succinyl-Leu-Tyr-|-NHMec, and Leu-Tyr-Leu-|-Tyr-Trp, in which cleavage of the -Tyr-|-Leu- and -Tyr-|-Trp bonds also occurs).. In terms of biological role, cleaves peptides in various proteins in a process that requires ATP hydrolysis. Has a chymotrypsin-like activity. Plays a major role in the degradation of misfolded proteins. In Listeria innocua serovar 6a (strain ATCC BAA-680 / CLIP 11262), this protein is ATP-dependent Clp protease proteolytic subunit.